The sequence spans 549 residues: Peptide transport periplasmic protein SapA (549 aa).

An N-terminal signal peptide occupies residues 1 to 21 (MRLVLSSLIVIAGLLSSQATA).

Belongs to the bacterial solute-binding protein 5 family.

Its subcellular location is the periplasm. In terms of biological role, involved in a peptide intake transport system that plays a role in the resistance to antimicrobial peptides. This chain is Peptide transport periplasmic protein SapA, found in Salmonella typhimurium (strain LT2 / SGSC1412 / ATCC 700720).